Consider the following 335-residue polypeptide: Beta-1,4-mannooligosaccharide phosphorylase (335 aa).

It belongs to the glycosyl hydrolase 130 family. As to quaternary structure, homohexamer in solution.

The enzyme catalyses [(1-&gt;4)-beta-D-mannosyl](n) + phosphate = [(1-&gt;4)-beta-D-mannosyl](n-1) + alpha-D-mannose 1-phosphate. In terms of biological role, catalyzes the phosphorolysis of beta-1,4-mannooligosaccharides to mannose 1-phosphate (Man1P) and shorter mannooligosaccharides. Can also catalyze the phosphorolysis of 4-O-beta-D-mannopyranosyl-D-glucopyranose (Man-Glc), but shows higher activity toward longer mannooligosaccharides. Involved in a mannan catabolic pathway which feeds into glycolysis. The chain is Beta-1,4-mannooligosaccharide phosphorylase from Ruminococcus albus (strain ATCC 27210 / DSM 20455 / JCM 14654 / NCDO 2250 / 7).